Here is a 306-residue protein sequence, read N- to C-terminus: tRNA dimethylallyltransferase (306 aa).

11–18 (GPTAVGKS) is an ATP binding site. 13-18 (TAVGKS) contacts substrate. The segment at 35–38 (DSIQ) is interaction with substrate tRNA.

Belongs to the IPP transferase family. In terms of assembly, monomer. Mg(2+) serves as cofactor.

The catalysed reaction is adenosine(37) in tRNA + dimethylallyl diphosphate = N(6)-dimethylallyladenosine(37) in tRNA + diphosphate. Catalyzes the transfer of a dimethylallyl group onto the adenine at position 37 in tRNAs that read codons beginning with uridine, leading to the formation of N6-(dimethylallyl)adenosine (i(6)A). In Borreliella burgdorferi (strain ATCC 35210 / DSM 4680 / CIP 102532 / B31) (Borrelia burgdorferi), this protein is tRNA dimethylallyltransferase.